A 796-amino-acid polypeptide reads, in one-letter code: Kinesin-like protein KIF3C (796 aa).

One can recognise a Kinesin motor domain in the interval 10-367 (ALKVVARCRP…LRFANRAKNI (358 aa)). 97 to 104 (GQTGTGKT) provides a ligand contact to ATP. 3 disordered regions span residues 251–292 (ERQN…PKEA), 397–421 (EKKG…SAPA), and 754–796 (PSTS…VDHD). The span at 270-284 (AGGGGGGGGTSGSGS) shows a compositional bias: gly residues. Residues 378–632 (KDTLLREFQE…NEQTRELKLK (255 aa)) adopt a coiled-coil conformation. Basic residues predominate over residues 401 to 416 (MLGKRPRRKSSRRKKA). A globular region spans residues 633-793 (YLIIENFIPP…SAPLHPATVV (161 aa)).

Belongs to the TRAFAC class myosin-kinesin ATPase superfamily. Kinesin family. Kinesin II subfamily. Heterodimer of KIF3A and KIF3C.

It localises to the cytoplasm. It is found in the cytoskeleton. Functionally, microtubule-based anterograde translocator for membranous organelles. The protein is Kinesin-like protein KIF3C (Kif3c) of Rattus norvegicus (Rat).